A 670-amino-acid chain; its full sequence is Leucine-rich repeat-containing protein 45 (670 aa).

LRR repeat units lie at residues 87-108, 115-136, 145-166, 173-194, and 201-223; these read TVKSLDLKGNNLRTTGAEALGK, SIRSLILEWNSLGVWEEGFSFF, FLQRLDLRNNQINHHGAGELAM, SLQELDLRWNNIGLLGGRALLN, and TLKKLELAGNNVPSDILKAVEQA. Positions 234-645 form a coiled coil; that stretch reads LSETQNRTSV…ISRMKEEEAQ (412 aa).

As to quaternary structure, homomer.

It is found in the cytoplasm. Its subcellular location is the cytoskeleton. It localises to the microtubule organizing center. The protein localises to the centrosome. Component of the proteinaceous fiber-like linker between two centrioles, required for centrosome cohesion. The polypeptide is Leucine-rich repeat-containing protein 45 (LRRC45) (Gallus gallus (Chicken)).